We begin with the raw amino-acid sequence, 377 residues long: Chaperone protein DnaJ (377 aa).

Positions 5-69 constitute a J domain; the sequence is EYYDRLGVSK…QKRAAYDQYG (65 aa). Residues 133 to 215 form a CR-type zinc finger; it reads GTEKEVHYNR…CHGTGHEKQS (83 aa). Residues Cys146, Cys149, Cys163, Cys166, Cys189, Cys192, Cys203, and Cys206 each coordinate Zn(2+). 4 CXXCXGXG motif repeats span residues 146 to 153, 163 to 170, 189 to 196, and 203 to 210; these read CHTCNGSG, CSKCHGSG, CDVCHGTG, and CPTCHGTG.

This sequence belongs to the DnaJ family. In terms of assembly, homodimer. Zn(2+) is required as a cofactor.

The protein localises to the cytoplasm. Its function is as follows. Participates actively in the response to hyperosmotic and heat shock by preventing the aggregation of stress-denatured proteins and by disaggregating proteins, also in an autonomous, DnaK-independent fashion. Unfolded proteins bind initially to DnaJ; upon interaction with the DnaJ-bound protein, DnaK hydrolyzes its bound ATP, resulting in the formation of a stable complex. GrpE releases ADP from DnaK; ATP binding to DnaK triggers the release of the substrate protein, thus completing the reaction cycle. Several rounds of ATP-dependent interactions between DnaJ, DnaK and GrpE are required for fully efficient folding. Also involved, together with DnaK and GrpE, in the DNA replication of plasmids through activation of initiation proteins. This Streptococcus mutans serotype c (strain ATCC 700610 / UA159) protein is Chaperone protein DnaJ.